We begin with the raw amino-acid sequence, 256 residues long: MLTIADKTFSSRLFTGTGKYANSQVMATSIIASGSELVTMALKRVDIDNRDDDILAPLIKAGVNLLPNTSGAKNAKEAIFAAKLAREALGTNWLKLEIHPDPKYLMPDPIETLAAAAELVRQGFIVLPYCHADPVLCKRLEEVGCAAVMPLGAPIGSNKGLASRDFLEIIIDQARVPVIVDAGIGAPSHAAEAMEMGADAVLVNTAIAAAADPIAMGRAFKLAVESGRMAYEAGLAGTINHAIASSPLTAFLDQTA.

K95 functions as the Schiff-base intermediate with DXP in the catalytic mechanism. Residues G156, 182–183 (AG), and 204–205 (NT) contribute to the 1-deoxy-D-xylulose 5-phosphate site.

The protein belongs to the ThiG family. Homotetramer. Forms heterodimers with either ThiH or ThiS.

The protein localises to the cytoplasm. The catalysed reaction is [ThiS sulfur-carrier protein]-C-terminal-Gly-aminoethanethioate + 2-iminoacetate + 1-deoxy-D-xylulose 5-phosphate = [ThiS sulfur-carrier protein]-C-terminal Gly-Gly + 2-[(2R,5Z)-2-carboxy-4-methylthiazol-5(2H)-ylidene]ethyl phosphate + 2 H2O + H(+). The protein operates within cofactor biosynthesis; thiamine diphosphate biosynthesis. Its function is as follows. Catalyzes the rearrangement of 1-deoxy-D-xylulose 5-phosphate (DXP) to produce the thiazole phosphate moiety of thiamine. Sulfur is provided by the thiocarboxylate moiety of the carrier protein ThiS. In vitro, sulfur can be provided by H(2)S. The sequence is that of Thiazole synthase from Photobacterium profundum (strain SS9).